Reading from the N-terminus, the 211-residue chain is Protein-methionine-sulfoxide reductase heme-binding subunit MsrQ (211 aa).

4 consecutive transmembrane segments (helical) span residues 17 to 37 (LAGL…GLGA), 82 to 102 (LWCF…ELGV), 116 to 136 (PYLT…FTST), and 153 to 173 (FVYL…KIIS).

This sequence belongs to the MsrQ family. Heterodimer of a catalytic subunit (MsrP) and a heme-binding subunit (MsrQ). FMN serves as cofactor. The cofactor is heme b.

It is found in the cell inner membrane. Its function is as follows. Part of the MsrPQ system that repairs oxidized periplasmic proteins containing methionine sulfoxide residues (Met-O), using respiratory chain electrons. Thus protects these proteins from oxidative-stress damage caused by reactive species of oxygen and chlorine generated by the host defense mechanisms. MsrPQ is essential for the maintenance of envelope integrity under bleach stress, rescuing a wide series of structurally unrelated periplasmic proteins from methionine oxidation, including the primary periplasmic chaperone SurA and the lipoprotein Pal. MsrQ provides electrons for reduction to the reductase catalytic subunit MsrP, using the quinone pool of the respiratory chain. The chain is Protein-methionine-sulfoxide reductase heme-binding subunit MsrQ from Shigella sonnei (strain Ss046).